The primary structure comprises 583 residues: ATP-dependent lipid A-core flippase (583 aa).

A run of 5 helical transmembrane segments spans residues 27–47 (LAVA…MVSL), 69–89 (LLVF…TYCL), 142–162 (ALVS…LMFY), 165–185 (WQLS…IGFV), and 249–269 (AAAN…VLYL). Positions 28–310 (AVAVVALIIN…LTNVTSQFQR (283 aa)) constitute an ABC transmembrane type-1 domain. An ABC transporter domain is found at 342–578 (VNVKDISFTY…DGAYAQLHRI (237 aa)). Residue 376–383 (GRSGSGKS) participates in ATP binding.

It belongs to the ABC transporter superfamily. Lipid exporter (TC 3.A.1.106) family. In terms of assembly, homodimer.

The protein localises to the cell inner membrane. It catalyses the reaction ATP + H2O + lipid A-core oligosaccharideSide 1 = ADP + phosphate + lipid A-core oligosaccharideSide 2.. Its function is as follows. Involved in lipopolysaccharide (LPS) biosynthesis. Translocates lipid A-core from the inner to the outer leaflet of the inner membrane. Transmembrane domains (TMD) form a pore in the inner membrane and the ATP-binding domain (NBD) is responsible for energy generation. This chain is ATP-dependent lipid A-core flippase, found in Vibrio vulnificus (strain CMCP6).